Consider the following 270-residue polypeptide: Bis(5'-nucleosyl)-tetraphosphatase, symmetrical (270 aa).

It belongs to the Ap4A hydrolase family.

It carries out the reaction P(1),P(4)-bis(5'-adenosyl) tetraphosphate + H2O = 2 ADP + 2 H(+). Its function is as follows. Hydrolyzes diadenosine 5',5'''-P1,P4-tetraphosphate to yield ADP. The protein is Bis(5'-nucleosyl)-tetraphosphatase, symmetrical of Haemophilus ducreyi (strain 35000HP / ATCC 700724).